A 137-amino-acid chain; its full sequence is uncharacterized protein (137 aa).

The CENP-V/GFA domain occupies 4–118 (YEGNCLCKAI…CIDDKPDCYD (115 aa)). Positions 8, 10, 27, 29, 32, 71, and 74 each coordinate Zn(2+).

The protein belongs to the Gfa family. Zn(2+) is required as a cofactor.

It is found in the cytoplasm. Its subcellular location is the nucleus. This is an uncharacterized protein from Schizosaccharomyces pombe (strain 972 / ATCC 24843) (Fission yeast).